A 188-amino-acid polypeptide reads, in one-letter code: 3-hydroxyanthranilate 3,4-dioxygenase 2 (188 aa).

Arg-46 provides a ligand contact to O2. His-50, Glu-70, and His-108 together coordinate Fe cation. A substrate-binding site is contributed by Glu-70. Substrate contacts are provided by Arg-112 and Glu-122.

Belongs to the 3-HAO family. Requires Fe(2+) as cofactor.

It is found in the cytoplasm. It catalyses the reaction 3-hydroxyanthranilate + O2 = (2Z,4Z)-2-amino-3-carboxymuconate 6-semialdehyde. It functions in the pathway cofactor biosynthesis; NAD(+) biosynthesis; quinolinate from L-kynurenine: step 3/3. Its function is as follows. Catalyzes the oxidative ring opening of 3-hydroxyanthranilate to 2-amino-3-carboxymuconate semialdehyde, which spontaneously cyclizes to quinolinate. The protein is 3-hydroxyanthranilate 3,4-dioxygenase 2 (bna1-2) of Aspergillus fumigatus (strain CBS 144.89 / FGSC A1163 / CEA10) (Neosartorya fumigata).